A 159-amino-acid polypeptide reads, in one-letter code: Ribosome maturation factor RimP (159 aa).

The protein belongs to the RimP family.

It localises to the cytoplasm. In terms of biological role, required for maturation of 30S ribosomal subunits. The sequence is that of Ribosome maturation factor RimP from Geobacter metallireducens (strain ATCC 53774 / DSM 7210 / GS-15).